A 475-amino-acid polypeptide reads, in one-letter code: Flavin-dependent monooxygenase (475 aa).

Belongs to the aromatic-ring hydroxylase family. It depends on FAD as a cofactor.

The protein resides in the cytoplasm. The catalysed reaction is a tetracycline + NADPH + O2 + H(+) = an 11a-hydroxytetracycline + NADP(+) + H2O. It carries out the reaction tetracycline + NADPH + O2 + H(+) = 11a-hydroxytetracycline + NADP(+) + H2O. Inhibited by anhydrotetracycline. An FAD-requiring monooxygenase active on some tetracycline antibiotic derivatives, which leads to their inactivation. Hydroxylates carbon 11a of tetracycline and some analogs. Confers resistance to tetracycline and doxycycline via an oxidoreductase activity; probably monooxygenates the antibiotics. Does not act on tigecycline. This chain is Flavin-dependent monooxygenase, found in Mycobacteroides abscessus (strain ATCC 19977 / DSM 44196 / CCUG 20993 / CIP 104536 / JCM 13569 / NCTC 13031 / TMC 1543 / L948) (Mycobacterium abscessus).